A 290-amino-acid polypeptide reads, in one-letter code: Putative beta-lactamase HcpC (290 aa).

Positions 1–25 (MLENVKKSLFRVLCLGALCLGGLMA) are cleaved as a signal peptide. TPR repeat units lie at residues 29–62 (PKELVGLGAKSYKEQDFTQAKKYFEKACDLKENS), 64–98 (CFNLGVLYYQGHGVEKNLKKAASFYSKACDLNYSN), 100–133 (CHLLGNLYYSGQGVSQNTNKALQYYSKACDLKYA), 134–170 (EGCASLGGIYHDGKVVTRDFKKAVEYFTKACDLNDGD), 172–205 (CTILGSLYDAGRGTPKDLKKALASYDKACDLKDS), 206–242 (PGCFNAGNMYHHGEGAAKNFKEALARYSKACELENGG), and 244–278 (CFNLGAMQYNGEGATRNEKQAIENFKKGCKLGAKG). Disulfide bonds link cysteine 56-cysteine 64, cysteine 92-cysteine 100, cysteine 128-cysteine 136, cysteine 164-cysteine 172, cysteine 200-cysteine 208, cysteine 236-cysteine 244, and cysteine 272-cysteine 280.

The protein belongs to the hcp beta-lactamase family.

It localises to the secreted. The enzyme catalyses a beta-lactam + H2O = a substituted beta-amino acid. May hydrolyze 6-aminopenicillinic acid and 7-aminocephalosporanic acid (ACA) derivatives. This is Putative beta-lactamase HcpC (hcpC) from Helicobacter pylori (strain J99 / ATCC 700824) (Campylobacter pylori J99).